A 478-amino-acid polypeptide reads, in one-letter code: Pyrrolysine--tRNA ligase (478 aa).

The disordered stretch occupies residues 106–188 (VMPKSVARTP…TSAMPASTSA (83 aa)). The segment covering 122-132 (APVQTLPSESQ) has biased composition (polar residues). Over residues 133–188 (PAPTTPISASTTAPASTSTTAPAPASTTAPAPASTTAPASASTTISTSAMPASTSA) the composition is skewed to low complexity.

Belongs to the class-II aminoacyl-tRNA synthetase family.

The protein localises to the cytoplasm. The catalysed reaction is tRNA(Pyl) + L-pyrrolysine + ATP = L-pyrrolysyl-tRNA(Pyl) + AMP + diphosphate. Its function is as follows. Catalyzes the attachment of pyrrolysine to tRNA(Pyl). Pyrrolysine is a lysine derivative encoded by the termination codon UAG. This Methanosarcina thermophila protein is Pyrrolysine--tRNA ligase.